Here is a 444-residue protein sequence, read N- to C-terminus: NADH-quinone oxidoreductase subunit F (444 aa).

62-71 (GRGGAGFLTG) lines the NAD(+) pocket. 177 to 224 (GAGRYICGEETALINSLEGRRANPRFKPPFPAYVGLWGKPTCVNNVET) serves as a coordination point for FMN. [4Fe-4S] cluster-binding residues include Cys-354, Cys-357, Cys-360, and Cys-401.

It belongs to the complex I 51 kDa subunit family. In terms of assembly, composed of 13 different subunits. Subunits NuoCD, E, F, and G constitute the peripheral sector of the complex. [4Fe-4S] cluster serves as cofactor. The cofactor is FMN.

The catalysed reaction is a quinone + NADH + 5 H(+)(in) = a quinol + NAD(+) + 4 H(+)(out). Functionally, NDH-1 shuttles electrons from NADH, via FMN and iron-sulfur (Fe-S) centers, to quinones in the respiratory chain. Couples the redox reaction to proton translocation (for every two electrons transferred, four hydrogen ions are translocated across the cytoplasmic membrane), and thus conserves the redox energy in a proton gradient. The protein is NADH-quinone oxidoreductase subunit F (nuoF) of Buchnera aphidicola subsp. Baizongia pistaciae (strain Bp).